A 490-amino-acid chain; its full sequence is Glutamate--tRNA ligase (490 aa).

The short motif at 13 to 23 (PSPTGTPHVGL) is the 'HIGH' region element. Positions 257 to 261 (KLSKR) match the 'KMSKS' region motif. Lysine 260 is an ATP binding site.

This sequence belongs to the class-I aminoacyl-tRNA synthetase family. Glutamate--tRNA ligase type 1 subfamily. As to quaternary structure, monomer.

It localises to the cytoplasm. It catalyses the reaction tRNA(Glu) + L-glutamate + ATP = L-glutamyl-tRNA(Glu) + AMP + diphosphate. Functionally, catalyzes the attachment of glutamate to tRNA(Glu) in a two-step reaction: glutamate is first activated by ATP to form Glu-AMP and then transferred to the acceptor end of tRNA(Glu). The protein is Glutamate--tRNA ligase of Mycobacterium bovis (strain BCG / Pasteur 1173P2).